Consider the following 165-residue polypeptide: Phosphopantetheine adenylyltransferase (165 aa).

Substrate is bound at residue Thr10. ATP is bound by residues 10 to 11 and His18; that span reads TF. 3 residues coordinate substrate: Lys42, Leu74, and Arg88. ATP contacts are provided by residues 89–91, Glu99, and 124–130; these read GLR and NAFISSS.

Belongs to the bacterial CoaD family. In terms of assembly, homohexamer. The cofactor is Mg(2+).

The protein resides in the cytoplasm. The enzyme catalyses (R)-4'-phosphopantetheine + ATP + H(+) = 3'-dephospho-CoA + diphosphate. The protein operates within cofactor biosynthesis; coenzyme A biosynthesis; CoA from (R)-pantothenate: step 4/5. Functionally, reversibly transfers an adenylyl group from ATP to 4'-phosphopantetheine, yielding dephospho-CoA (dPCoA) and pyrophosphate. This is Phosphopantetheine adenylyltransferase from Helicobacter hepaticus (strain ATCC 51449 / 3B1).